Here is a 407-residue protein sequence, read N- to C-terminus: Pyridinium-3,5-bisthiocarboxylic acid mononucleotide nickel insertion protein (407 aa).

The protein belongs to the LarC family.

It carries out the reaction Ni(II)-pyridinium-3,5-bisthiocarboxylate mononucleotide = pyridinium-3,5-bisthiocarboxylate mononucleotide + Ni(2+). Its function is as follows. Involved in the biosynthesis of a nickel-pincer cofactor ((SCS)Ni(II) pincer complex). Binds Ni(2+), and functions in nickel delivery to pyridinium-3,5-bisthiocarboxylic acid mononucleotide (P2TMN), to form the mature cofactor. Is thus probably required for the activation of nickel-pincer cofactor-dependent enzymes. The protein is Pyridinium-3,5-bisthiocarboxylic acid mononucleotide nickel insertion protein of Acetivibrio thermocellus (strain ATCC 27405 / DSM 1237 / JCM 9322 / NBRC 103400 / NCIMB 10682 / NRRL B-4536 / VPI 7372) (Clostridium thermocellum).